We begin with the raw amino-acid sequence, 177 residues long: Large ribosomal subunit protein uL6 (177 aa).

Belongs to the universal ribosomal protein uL6 family. Part of the 50S ribosomal subunit.

Its function is as follows. This protein binds to the 23S rRNA, and is important in its secondary structure. It is located near the subunit interface in the base of the L7/L12 stalk, and near the tRNA binding site of the peptidyltransferase center. In Shewanella frigidimarina (strain NCIMB 400), this protein is Large ribosomal subunit protein uL6.